Here is a 272-residue protein sequence, read N- to C-terminus: Energy-coupling factor transporter ATP-binding protein EcfA1 (272 aa).

The 235-residue stretch at 5–239 (IKIDNLKYSY…RKALHENGLE (235 aa)) folds into the ABC transporter domain. ATP is bound at residue 37-44 (GHNGSGKS). The Proton acceptor role is filled by E163.

This sequence belongs to the ABC transporter superfamily. Energy-coupling factor EcfA family. Forms a stable energy-coupling factor (ECF) transporter complex probably composed of 2 membrane-embedded substrate-binding proteins (S component), 2 ATP-binding proteins (A component) and 2 transmembrane proteins (T component). This complex interacts with a number of substrate-specific components, including FolT, PanT and RibU for 5-formyltetrahydrofolate, pantothenate and riboflavin respectively.

It is found in the cell membrane. Functionally, ATP-binding (A) component of a common energy-coupling factor (ECF) ABC-transporter complex. Unlike classic ABC transporters this ECF transporter provides the energy necessary to transport a number of different substrates including 5-formyltetrahydrofolate, pantothenate and riboflavin. Expression of the complex plus FolT in E.coli allows 5-formyltetrahydrofolate uptake; 5-formyltetrahydrofolate is not taken up in the absence of FolT or the EcfA1A2T complex. The sequence is that of Energy-coupling factor transporter ATP-binding protein EcfA1 from Leuconostoc mesenteroides subsp. mesenteroides (strain ATCC 8293 / DSM 20343 / BCRC 11652 / CCM 1803 / JCM 6124 / NCDO 523 / NBRC 100496 / NCIMB 8023 / NCTC 12954 / NRRL B-1118 / 37Y).